Here is a 414-residue protein sequence, read N- to C-terminus: Methyltransferase-like protein 2 (414 aa).

Positions 56–77 (LNQHSSESNPKKRKRKQKNSSF) are disordered.

It belongs to the MT-A70-like family.

In terms of biological role, probable methyltransferase. The protein is Methyltransferase-like protein 2 of Arabidopsis thaliana (Mouse-ear cress).